The following is a 199-amino-acid chain: Recombination protein RecR (199 aa).

Residues cysteine 57–cysteine 72 form a C4-type zinc finger. Positions serine 81 to proline 176 constitute a Toprim domain.

The protein belongs to the RecR family.

May play a role in DNA repair. It seems to be involved in an RecBC-independent recombinational process of DNA repair. It may act with RecF and RecO. The sequence is that of Recombination protein RecR from Shewanella baltica (strain OS195).